A 149-amino-acid chain; its full sequence is D-aminoacyl-tRNA deacylase (149 aa).

The Gly-cisPro motif, important for rejection of L-amino acids motif lies at 137–138 (GP).

The protein belongs to the DTD family. Homodimer.

The protein resides in the cytoplasm. It carries out the reaction glycyl-tRNA(Ala) + H2O = tRNA(Ala) + glycine + H(+). The enzyme catalyses a D-aminoacyl-tRNA + H2O = a tRNA + a D-alpha-amino acid + H(+). Its function is as follows. An aminoacyl-tRNA editing enzyme that deacylates mischarged D-aminoacyl-tRNAs. Also deacylates mischarged glycyl-tRNA(Ala), protecting cells against glycine mischarging by AlaRS. Acts via tRNA-based rather than protein-based catalysis; rejects L-amino acids rather than detecting D-amino acids in the active site. By recycling D-aminoacyl-tRNA to D-amino acids and free tRNA molecules, this enzyme counteracts the toxicity associated with the formation of D-aminoacyl-tRNA entities in vivo and helps enforce protein L-homochirality. The polypeptide is D-aminoacyl-tRNA deacylase (Desulfitobacterium hafniense (strain DSM 10664 / DCB-2)).